A 102-amino-acid polypeptide reads, in one-letter code: Large ribosomal subunit protein bL21 (102 aa).

Belongs to the bacterial ribosomal protein bL21 family. Part of the 50S ribosomal subunit. Contacts protein L20.

This protein binds to 23S rRNA in the presence of protein L20. In Pediococcus pentosaceus (strain ATCC 25745 / CCUG 21536 / LMG 10740 / 183-1w), this protein is Large ribosomal subunit protein bL21.